A 345-amino-acid chain; its full sequence is RNA polymerase II holoenzyme cyclin-like subunit (345 aa).

The region spanning Gln53–Ser144 is the Cyclin N-terminal domain. A disordered region spans residues Gly256–Asn285.

It belongs to the cyclin family. Cyclin C subfamily. Component of the srb8-11 complex, a regulatory module of the Mediator complex.

It localises to the nucleus. Component of the srb8-11 complex. The srb8-11 complex is a regulatory module of the Mediator complex which is itself involved in regulation of basal and activated RNA polymerase II-dependent transcription. The srb8-11 complex may be involved in the transcriptional repression of a subset of genes regulated by Mediator. It may inhibit the association of the Mediator complex with RNA polymerase II to form the holoenzyme complex. The srb8-11 complex phosphorylates the C-terminal domain (CTD) of the largest subunit of RNA polymerase II. The sequence is that of RNA polymerase II holoenzyme cyclin-like subunit (ssn8) from Neurospora crassa (strain ATCC 24698 / 74-OR23-1A / CBS 708.71 / DSM 1257 / FGSC 987).